A 329-amino-acid chain; its full sequence is Fructose-1,6-bisphosphatase class 1 (329 aa).

Glu-84, Asp-103, Leu-105, and Asp-106 together coordinate Mg(2+). Substrate-binding positions include 106–109 (DGSS), Asn-196, and Lys-262. Glu-268 contributes to the Mg(2+) binding site.

Belongs to the FBPase class 1 family. In terms of assembly, homotetramer. It depends on Mg(2+) as a cofactor.

Its subcellular location is the cytoplasm. The catalysed reaction is beta-D-fructose 1,6-bisphosphate + H2O = beta-D-fructose 6-phosphate + phosphate. The protein operates within carbohydrate biosynthesis; gluconeogenesis. The sequence is that of Fructose-1,6-bisphosphatase class 1 from Shewanella sediminis (strain HAW-EB3).